Here is a 268-residue protein sequence, read N- to C-terminus: Bis(5'-nucleosyl)-tetraphosphatase, symmetrical (268 aa).

This sequence belongs to the Ap4A hydrolase family.

It carries out the reaction P(1),P(4)-bis(5'-adenosyl) tetraphosphate + H2O = 2 ADP + 2 H(+). Its function is as follows. Hydrolyzes diadenosine 5',5'''-P1,P4-tetraphosphate to yield ADP. The sequence is that of Bis(5'-nucleosyl)-tetraphosphatase, symmetrical from Vibrio campbellii (strain ATCC BAA-1116).